The chain runs to 317 residues: Melanocyte-stimulating hormone receptor (317 aa).

The Extracellular portion of the chain corresponds to Met-1–Glu-37. An N-linked (GlcNAc...) asparagine glycan is attached at Asn-29. The chain crosses the membrane as a helical span at residues Val-38–Ile-63. At Ala-64–Pro-72 the chain is on the cytoplasmic side. A helical membrane pass occupies residues Met-73 to Leu-93. The Extracellular portion of the chain corresponds to Glu-94–Asn-118. Residues Val-119–Val-140 form a helical membrane-spanning segment. Residues Asp-141–Arg-163 lie on the Cytoplasmic side of the membrane. Residues Ile-164 to Tyr-183 form a helical membrane-spanning segment. Residues Asn-184–Cys-191 are Extracellular-facing. A helical membrane pass occupies residues Leu-192–Leu-211. Over Ala-212–Ala-240 the chain is Cytoplasmic. Residues Ala-241–Leu-266 traverse the membrane as a helical segment. Residues Cys-267–Asn-279 are Extracellular-facing. Residues Phe-280–Phe-300 form a helical membrane-spanning segment. Topologically, residues Arg-301–Trp-317 are cytoplasmic. The S-palmitoyl cysteine moiety is linked to residue Cys-315.

It belongs to the G-protein coupled receptor 1 family. Interacts with MGRN1, but does not undergo MGRN1-mediated ubiquitination; this interaction competes with GNAS-binding and thus inhibits agonist-induced cAMP production. Interacts with OPN3; the interaction results in a decrease in MC1R-mediated cAMP signaling and ultimately a decrease in melanin production in melanocytes.

It is found in the cell membrane. Receptor for MSH (alpha, beta and gamma) and ACTH. The activity of this receptor is mediated by G proteins which activate adenylate cyclase. Mediates melanogenesis, the production of eumelanin (black/brown) and phaeomelanin (red/yellow), via regulation of cAMP signaling in melanocytes. This is Melanocyte-stimulating hormone receptor (MC1R) from Capra hircus (Goat).